Reading from the N-terminus, the 317-residue chain is MAELACFCYPHLENDSYKFIPFNNLAIKAMLTAKVDKKDMDKFYDSIIYGIAPPPQFKKRYNTNDNSRGMNFETIMFTKVAMLICEALNSLKVTQANVSNVLSRVVSIRHLENLVIRKENPQDILFHSKDLLLKSTLIAIGQSKEIETTITAEGGEIVFQNAAFTMWKLTYLEHQLMPILDQNFIEYKVTLNEDKPISDVHVKELVAELRWQYNKFAVITHGKGHYRIVKYSSVANHADRVYATFKSNVKTGVNNDFNLLDQRIIWQNWYAFTSSMKQGNTLDVCKRLLFQKMKPEKNPFKGLSTDRKMDEVSQVGV.

Residues S107 to R109, K188, and H221 to K223 contribute to the ATP site. An RNA-binding region spans residues L205–V241. Catalysis depends on H225, which acts as the For NTPase and RTPase activities. R227 contributes to the ATP binding site.

The protein belongs to the rotavirus NSP2 family. As to quaternary structure, homooctamer. Interacts with VP1; this interaction is weak. Interacts with NSP5; this interaction leads to up-regulation of NSP5 phosphorylation and formation of viral factories. Interacts with host DCP1A, DCP1B, DDX6, EDC4 and EIF2S1/eIF2-alpha; these interactions are probably part of the sequestration of some host SGs and PBs proteins in viral factories. It depends on Mg(2+) as a cofactor.

The protein resides in the host cytoplasm. Its function is as follows. Participates in replication and packaging of the viral genome. Plays a crucial role, together with NSP5, in the formation of virus factories (viroplasms), which are large inclusions in the host cytoplasm where replication intermediates are assembled and viral RNA replication takes place. Displays ssRNA binding, NTPase, RNA triphosphatase (RTPase) and ATP-independent helix-unwinding activities. The unwinding activity may prepare and organize plus-strand RNAs for packaging and replication by removing interfering secondary structures. The RTPase activity plays a role in the removal of the gamma-phosphate from the rotavirus RNA minus strands of dsRNA genome segments. Participates in the selective exclusion of host proteins from stress granules (SG) and P bodies (PB). Also participates in the sequestration of these remodeled organelles in viral factories. The polypeptide is Non-structural protein 2 (Chlorocebus pygerythrus (Vervet monkey)).